The sequence spans 713 residues: Cyclomaltodextrin glucanotransferase (713 aa).

An N-terminal signal peptide occupies residues 1-27 (MKKQVKWLTSVSMSVGIALGAALPVWA). Residues 28–165 (SPDTSVNNKL…NIKVVMDFAP (138 aa)) form an A1 region. The Ca(2+) site is built by Asp54, Asn56, Asn59, Asn60, Gly78, and Asp80. 127 to 128 (YW) is a binding site for substrate. Asn166 provides a ligand contact to Ca(2+). The interval 166 to 229 (NHTNPASSTD…NLYDLADINQ (64 aa)) is b. Substrate is bound at residue His167. Ile217 provides a ligand contact to Ca(2+). 220–223 (NLYD) serves as a coordination point for substrate. Ca(2+) is bound at residue Asp226. Residues 230–434 (NNNTIDSYLK…LRKSNPALAY (205 aa)) form an A2 region. Substrate is bound at residue Arg254. Asp256 acts as the Nucleophile in catalysis. 259–260 (KH) contacts substrate. His260 contributes to the Ca(2+) binding site. The active-site Proton donor is Glu285. The substrate site is built by His355, Asp399, and Arg403. The tract at residues 435–522 (GSTTQRWVNS…GTAVWQYTTT (88 aa)) is c. The d stretch occupies residues 523–609 (ESSPIIGNVG…SAAFNNFNVL (87 aa)). In terms of domain architecture, IPT/TIG spans 526-606 (PIIGNVGPTM…GTTSAAFNNF (81 aa)). The CBM20 domain maps to 608–713 (VLTADQVTVR…VATVTVDWQN (106 aa)). The tract at residues 610-713 (TADQVTVRFK…VATVTVDWQN (104 aa)) is e.

Belongs to the glycosyl hydrolase 13 family. As to quaternary structure, monomer. Ca(2+) is required as a cofactor.

Its subcellular location is the secreted. It carries out the reaction Cyclizes part of a (1-&gt;4)-alpha-D-glucan chain by formation of a (1-&gt;4)-alpha-D-glucosidic bond.. The chain is Cyclomaltodextrin glucanotransferase from Paenibacillus macerans (Bacillus macerans).